The primary structure comprises 133 residues: Putative elongation factor 1-delta-like protein (133 aa).

The span at S58–G73 shows a compositional bias: low complexity. Disordered stretches follow at residues S58–E77 and N89–G133. The span at N89 to A102 shows a compositional bias: basic and acidic residues.

The protein belongs to the EF-1-beta/EF-1-delta family.

The sequence is that of Putative elongation factor 1-delta-like protein (EEF1DP3) from Homo sapiens (Human).